We begin with the raw amino-acid sequence, 455 residues long: Kynurenine--oxoglutarate transaminase 3 (455 aa).

Gly71 serves as a coordination point for substrate. Lys116 carries the N6-acetyllysine; alternate modification. N6-succinyllysine; alternate is present on Lys116. Asn218 contacts substrate. Lys280 carries the post-translational modification N6-(pyridoxal phosphate)lysine. Arg430 lines the substrate pocket.

The protein belongs to the class-I pyridoxal-phosphate-dependent aminotransferase family. As to quaternary structure, homodimer. It depends on pyridoxal 5'-phosphate as a cofactor.

It catalyses the reaction L-kynurenine + 2-oxoglutarate = kynurenate + L-glutamate + H2O. It carries out the reaction L-kynurenine + glyoxylate = kynurenate + glycine + H2O. The catalysed reaction is 3-hydroxy-L-kynurenine + glyoxylate = xanthurenate + glycine + H2O. The enzyme catalyses an S-substituted L-cysteine + H2O = a thiol + pyruvate + NH4(+). It functions in the pathway amino-acid degradation; L-kynurenine degradation; kynurenate from L-kynurenine: step 1/2. Functionally, catalyzes the irreversible transamination of the L-tryptophan metabolite L-kynurenine to form kynurenic acid (KA), an intermediate in the tryptophan catabolic pathway which is also a broad spectrum antagonist of the three ionotropic excitatory amino acid receptors among others. May catalyze the beta-elimination of S-conjugates and Se-conjugates of L-(seleno)cysteine, resulting in the cleavage of the C-S or C-Se bond. Has transaminase activity towards L-kynurenine, tryptophan, phenylalanine, serine, cysteine, methionine, histidine, glutamine and asparagine with glyoxylate as an amino group acceptor (in vitro). Has lower activity with 2-oxoglutarate as amino group acceptor (in vitro). The chain is Kynurenine--oxoglutarate transaminase 3 from Bos taurus (Bovine).